We begin with the raw amino-acid sequence, 355 residues long: Chorismate synthase (355 aa).

Arginine 46 contributes to the NADP(+) binding site. FMN-binding positions include 123–125, 233–234, glycine 273, 288–292, and arginine 314; these read RAS, NG, and KPTPS.

Belongs to the chorismate synthase family. In terms of assembly, homotetramer. Requires FMNH2 as cofactor.

The catalysed reaction is 5-O-(1-carboxyvinyl)-3-phosphoshikimate = chorismate + phosphate. It functions in the pathway metabolic intermediate biosynthesis; chorismate biosynthesis; chorismate from D-erythrose 4-phosphate and phosphoenolpyruvate: step 7/7. Its function is as follows. Catalyzes the anti-1,4-elimination of the C-3 phosphate and the C-6 proR hydrogen from 5-enolpyruvylshikimate-3-phosphate (EPSP) to yield chorismate, which is the branch point compound that serves as the starting substrate for the three terminal pathways of aromatic amino acid biosynthesis. This reaction introduces a second double bond into the aromatic ring system. The protein is Chorismate synthase of Campylobacter concisus (strain 13826).